A 356-amino-acid chain; its full sequence is Sorbitol dehydrogenase (356 aa).

Cys44 lines the Zn(2+) pocket. Tyr50 contributes to the substrate binding site. Residues His69 and Glu70 each contribute to the Zn(2+) site. Glu155 serves as a coordination point for substrate. NAD(+)-binding residues include Ile183, Asp203, and Arg208. Phosphoserine is present on residues Ser210 and Ser224. NAD(+) contacts are provided by residues 272 to 274 (VGL) and 296 to 298 (VFR). Positions 298 and 299 each coordinate substrate.

The protein belongs to the zinc-containing alcohol dehydrogenase family. As to quaternary structure, homotetramer. It depends on Zn(2+) as a cofactor. Expressed in lens.

Its subcellular location is the mitochondrion membrane. The protein localises to the cell projection. The protein resides in the cilium. It localises to the flagellum. It carries out the reaction xylitol + NAD(+) = D-xylulose + NADH + H(+). It catalyses the reaction keto-D-fructose + NADH + H(+) = D-sorbitol + NAD(+). The enzyme catalyses L-iditol + NAD(+) = keto-L-sorbose + NADH + H(+). Its activity is regulated as follows. Inhibited in vitro by metal chelators such as EDTA and 1,10-phenanthroline. In terms of biological role, polyol dehydrogenase that catalyzes the reversible NAD(+)-dependent oxidation of various sugar alcohols. Is mostly active with xylitol, D-sorbitol (D-glucitol) and L-iditol as substrates, leading to the C2-oxidized products D-xylulose, D-fructose and L-sorbose, respectively. Is a key enzyme in the polyol pathway that interconverts glucose and fructose via sorbitol, which constitutes an important alternate route for glucose metabolism. May play a role in sperm motility by using sorbitol as an alternative energy source for sperm motility. Cannot use NADP(+) as the electron acceptor. Has no activity on ethanol, methanol, glycerol, galactitol and fructose 6-phosphate. This is Sorbitol dehydrogenase (SORD) from Bos taurus (Bovine).